Consider the following 428-residue polypeptide: Cell division protein FtsZ (428 aa).

GTP contacts are provided by residues G73 to N77, G160 to G162, E191, R195, and D239. A disordered region spans residues N378–N428. Residues T392–P402 are compositionally biased toward polar residues.

Belongs to the FtsZ family. As to quaternary structure, homodimer. Polymerizes to form a dynamic ring structure in a strictly GTP-dependent manner. Interacts directly with several other division proteins.

The protein resides in the cytoplasm. Its function is as follows. Essential cell division protein that forms a contractile ring structure (Z ring) at the future cell division site. The regulation of the ring assembly controls the timing and the location of cell division. One of the functions of the FtsZ ring is to recruit other cell division proteins to the septum to produce a new cell wall between the dividing cells. Binds GTP and shows GTPase activity. The polypeptide is Cell division protein FtsZ (Nostoc sp. (strain PCC 7120 / SAG 25.82 / UTEX 2576)).